Reading from the N-terminus, the 588-residue chain is Snake venom 5'-nucleotidase (588 aa).

Residues 1–40 (MQTPKRRRGAQGCPRSSPSPPLLLLVRAVWFCAALSVAAG) form the signal peptide. Positions 51 and 53 each coordinate Zn(2+). Cys66 and Cys71 are joined by a disulfide. Residues Asp99 and Asn131 each coordinate Zn(2+). Asn167 is a glycosylation site (N-linked (GlcNAc...) asparagine). Zn(2+)-binding residues include His234 and His257. Asn347 and Asn361 each carry an N-linked (GlcNAc...) asparagine glycan. 2 cysteine pairs are disulfide-bonded: Cys367-Cys372 and Cys379-Cys401. Residue Arg368 participates in AMP binding. AMP-binding residues include Asn404 and Arg409. A glycan (N-linked (GlcNAc...) asparagine) is linked at Asn418. Phe432 contributes to the AMP binding site. Cys491 and Cys494 form a disulfide bridge. AMP is bound by residues Phe515 and Asp521. A glycan (N-linked (GlcNAc...) asparagine) is linked at Asn532. Ser564 is lipidated: GPI-anchor amidated serine. Residues 565-588 (AGTLFQAQLFLTWGLCVSLLYFIL) constitute a propeptide, removed in mature form.

The protein belongs to the 5'-nucleotidase family. Zn(2+) serves as cofactor. Venom 5'-nucleotidases (or a part thereof) may be released into the venom via exosome-like vesicles. They may be attached via a GPI anchor to the membrane of these vesicles. Soluble forms of 5'-nucleotidase might be released by cleavage of the ectodomain in the exosome-like vesicles or venom gland cells. In terms of tissue distribution, expressed by the venom gland.

It localises to the membrane. The catalysed reaction is a ribonucleoside 5'-phosphate + H2O = a ribonucleoside + phosphate. Hydrolyzes nucleotides into nucleosides. Snake venom 5'-nucleotidases are widely distributed among venomous snake taxa, but there is a lack of information about their biological activities. They have been shown to inhibit platelet aggregation. This effect may be due to the liberation of inhibitory AMP or adenosine by its action on ADP released upon initiation of aggregation. Venom 5'-nucleotidases are also known to synergistically act in vivo with other toxins like ADPases, phospholipases, and disintegrins to exert a more pronounced anti-coagulant effect. In Crotalus adamanteus (Eastern diamondback rattlesnake), this protein is Snake venom 5'-nucleotidase.